A 478-amino-acid chain; its full sequence is Serine carboxypeptidase-like 33 (478 aa).

The first 33 residues, 1–33 (MNLTLPMKKQKFLLIISLLILLSLLHQDYHIEA), serve as a signal peptide directing secretion. 3 disulfide bridges follow: C95-C361, C257-C268, and C292-C330. N-linked (GlcNAc...) asparagine glycosylation is found at N114 and N146. S188 is a catalytic residue. Residues N263, N295, and N362 are each glycosylated (N-linked (GlcNAc...) asparagine). Catalysis depends on residues D398 and H451.

This sequence belongs to the peptidase S10 family. As to expression, expressed in senescent leaves and flowers.

Its subcellular location is the secreted. Its function is as follows. Probable carboxypeptidase. This Arabidopsis thaliana (Mouse-ear cress) protein is Serine carboxypeptidase-like 33 (SCPL33).